A 345-amino-acid chain; its full sequence is S-adenosylmethionine:tRNA ribosyltransferase-isomerase (345 aa).

This sequence belongs to the QueA family. Monomer.

The protein localises to the cytoplasm. The enzyme catalyses 7-aminomethyl-7-carbaguanosine(34) in tRNA + S-adenosyl-L-methionine = epoxyqueuosine(34) in tRNA + adenine + L-methionine + 2 H(+). It functions in the pathway tRNA modification; tRNA-queuosine biosynthesis. In terms of biological role, transfers and isomerizes the ribose moiety from AdoMet to the 7-aminomethyl group of 7-deazaguanine (preQ1-tRNA) to give epoxyqueuosine (oQ-tRNA). In Shewanella putrefaciens (strain CN-32 / ATCC BAA-453), this protein is S-adenosylmethionine:tRNA ribosyltransferase-isomerase.